Reading from the N-terminus, the 89-residue chain is Small ribosomal subunit protein uS15 (89 aa).

Belongs to the universal ribosomal protein uS15 family. In terms of assembly, part of the 30S ribosomal subunit. Forms a bridge to the 50S subunit in the 70S ribosome, contacting the 23S rRNA.

Functionally, one of the primary rRNA binding proteins, it binds directly to 16S rRNA where it helps nucleate assembly of the platform of the 30S subunit by binding and bridging several RNA helices of the 16S rRNA. Forms an intersubunit bridge (bridge B4) with the 23S rRNA of the 50S subunit in the ribosome. The sequence is that of Small ribosomal subunit protein uS15 from Salinispora tropica (strain ATCC BAA-916 / DSM 44818 / JCM 13857 / NBRC 105044 / CNB-440).